Reading from the N-terminus, the 619-residue chain is Dihydroxy-acid dehydratase (619 aa).

Asp80 contributes to the Mg(2+) binding site. Cys121 lines the [2Fe-2S] cluster pocket. Residues Asp122 and Lys123 each coordinate Mg(2+). Lys123 carries the N6-carboxylysine modification. Cys196 is a [2Fe-2S] cluster binding site. Glu492 provides a ligand contact to Mg(2+). Ser518 functions as the Proton acceptor in the catalytic mechanism.

The protein belongs to the IlvD/Edd family. As to quaternary structure, homodimer. Requires [2Fe-2S] cluster as cofactor. Mg(2+) serves as cofactor.

The enzyme catalyses (2R)-2,3-dihydroxy-3-methylbutanoate = 3-methyl-2-oxobutanoate + H2O. It carries out the reaction (2R,3R)-2,3-dihydroxy-3-methylpentanoate = (S)-3-methyl-2-oxopentanoate + H2O. It participates in amino-acid biosynthesis; L-isoleucine biosynthesis; L-isoleucine from 2-oxobutanoate: step 3/4. It functions in the pathway amino-acid biosynthesis; L-valine biosynthesis; L-valine from pyruvate: step 3/4. Functionally, functions in the biosynthesis of branched-chain amino acids. Catalyzes the dehydration of (2R,3R)-2,3-dihydroxy-3-methylpentanoate (2,3-dihydroxy-3-methylvalerate) into 2-oxo-3-methylpentanoate (2-oxo-3-methylvalerate) and of (2R)-2,3-dihydroxy-3-methylbutanoate (2,3-dihydroxyisovalerate) into 2-oxo-3-methylbutanoate (2-oxoisovalerate), the penultimate precursor to L-isoleucine and L-valine, respectively. In Bifidobacterium adolescentis (strain ATCC 15703 / DSM 20083 / NCTC 11814 / E194a), this protein is Dihydroxy-acid dehydratase.